A 112-amino-acid polypeptide reads, in one-letter code: UPF0235 protein Atu2660 (112 aa).

The protein belongs to the UPF0235 family.

The polypeptide is UPF0235 protein Atu2660 (Agrobacterium fabrum (strain C58 / ATCC 33970) (Agrobacterium tumefaciens (strain C58))).